The sequence spans 216 residues: Ribosomal RNA small subunit methyltransferase G (216 aa).

Residues Gly-82, Leu-87, 135–136 (AE), and Arg-148 each bind S-adenosyl-L-methionine.

It belongs to the methyltransferase superfamily. RNA methyltransferase RsmG family.

It localises to the cytoplasm. It carries out the reaction guanosine(527) in 16S rRNA + S-adenosyl-L-methionine = N(7)-methylguanosine(527) in 16S rRNA + S-adenosyl-L-homocysteine. Specifically methylates the N7 position of guanine in position 527 of 16S rRNA. This chain is Ribosomal RNA small subunit methyltransferase G, found in Caulobacter vibrioides (strain ATCC 19089 / CIP 103742 / CB 15) (Caulobacter crescentus).